Reading from the N-terminus, the 157-residue chain is Transcription elongation factor GreA (157 aa).

The protein belongs to the GreA/GreB family.

Necessary for efficient RNA polymerase transcription elongation past template-encoded arresting sites. The arresting sites in DNA have the property of trapping a certain fraction of elongating RNA polymerases that pass through, resulting in locked ternary complexes. Cleavage of the nascent transcript by cleavage factors such as GreA or GreB allows the resumption of elongation from the new 3'terminus. GreA releases sequences of 2 to 3 nucleotides. This is Transcription elongation factor GreA from Azorhizobium caulinodans (strain ATCC 43989 / DSM 5975 / JCM 20966 / LMG 6465 / NBRC 14845 / NCIMB 13405 / ORS 571).